The primary structure comprises 406 residues: Probable endo-xylogalacturonan hydrolase A (406 aa).

The N-terminal stretch at 1–18 (MISLNSIFLLSLVGLSRA) is a signal peptide. The segment at 20 to 49 (PSRSETSPDRTIKPRAACTPTAGGSSSTDD) is disordered. PbH1 repeat units follow at residues 183–213 (TSNA…DIGA), 214–235 (STYV…AFKP), 237–257 (ANYV…SVGS), 266–289 (VQNV…KTYP), 299–320 (VKNA…QIQS), and 368–390 (TCDV…ILCG). Asp228 functions as the Proton donor in the catalytic mechanism. An N-linked (GlcNAc...) asparagine glycan is attached at Asn244. His251 is an active-site residue. N-linked (GlcNAc...) asparagine glycosylation is found at Asn273, Asn278, and Asn301.

The protein belongs to the glycosyl hydrolase 28 family.

It is found in the secreted. Functionally, pectinolytic enzyme involved in the degradation of xylogalacturonan (xga), a galacturonan backbone heavily substituted with xylose, and which is one important component of the hairy regions of pectin. Activity requires a galacturonic acid backbone substituted with xylose. In Aspergillus flavus (strain ATCC 200026 / FGSC A1120 / IAM 13836 / NRRL 3357 / JCM 12722 / SRRC 167), this protein is Probable endo-xylogalacturonan hydrolase A (xghA).